A 449-amino-acid chain; its full sequence is Aspartyl protease AED3 (449 aa).

The first 23 residues, 1–23, serve as a signal peptide directing secretion; that stretch reads MASSSLHFFFFLTLLLPFTFTTA. The Peptidase A1 domain occupies 104-444; that stretch reads YVVRAKLGTP…DVPNSRIGIA (341 aa). Residue Asp-122 is part of the active site. An intrachain disulfide couples Cys-132 to Cys-138. N-linked (GlcNAc...) asparagine glycans are attached at residues Asn-140, Asn-148, Asn-184, Asn-211, and Asn-297. Asp-328 is a catalytic residue. N-linked (GlcNAc...) asparagine glycosylation occurs at Asn-353. A disulfide bridge connects residues Cys-366 and Cys-405.

It belongs to the peptidase A1 family.

It is found in the secreted. It localises to the extracellular space. Its subcellular location is the apoplast. This is Aspartyl protease AED3 from Arabidopsis thaliana (Mouse-ear cress).